The following is a 201-amino-acid chain: dTTP/UTP pyrophosphatase (201 aa).

Catalysis depends on Asp73, which acts as the Proton acceptor.

This sequence belongs to the Maf family. YhdE subfamily. A divalent metal cation is required as a cofactor.

The protein resides in the cytoplasm. The catalysed reaction is dTTP + H2O = dTMP + diphosphate + H(+). The enzyme catalyses UTP + H2O = UMP + diphosphate + H(+). Nucleoside triphosphate pyrophosphatase that hydrolyzes dTTP and UTP. May have a dual role in cell division arrest and in preventing the incorporation of modified nucleotides into cellular nucleic acids. This Pseudomonas aeruginosa (strain ATCC 15692 / DSM 22644 / CIP 104116 / JCM 14847 / LMG 12228 / 1C / PRS 101 / PAO1) protein is dTTP/UTP pyrophosphatase.